A 352-amino-acid polypeptide reads, in one-letter code: Long-chain-alcohol O-fatty-acyltransferase (352 aa).

8 helical membrane-spanning segments follow: residues Val-13–His-33, Gly-34–Leu-54, Leu-67–Leu-87, Lys-128–Phe-148, Phe-155–Ala-175, Val-239–Phe-259, Ser-267–Val-287, and Gly-303–Val-323.

The protein belongs to the wax synthase family.

It is found in the microsome membrane. The catalysed reaction is a long chain fatty alcohol + a fatty acyl-CoA = a wax ester + CoA. In terms of biological role, catalyzes the final step in the synthesis of long-chain linear esters (waxes). Has activity with both saturated and monounsaturated acyl-CoA ranging from 14 to 24 carbons in length, but C20:1 acyl-CoA is the preferred substrate. In Simmondsia chinensis (Jojoba), this protein is Long-chain-alcohol O-fatty-acyltransferase.